The following is a 376-amino-acid chain: Carbamoyl phosphate synthase small chain (376 aa).

The tract at residues 1-183 is CPSase; it reads MSKAVLVLED…PDGPPGVSRF (183 aa). Ser46, Gly232, and Gly234 together coordinate L-glutamine. The region spanning 184-376 is the Glutamine amidotransferase type-1 domain; it reads TVAALDLGIK…FVELMAGEGR (193 aa). The active-site Nucleophile is Cys260. L-glutamine-binding residues include Phe261, Gln264, Asn302, Gly304, and Phe305. Residues His350 and Glu352 contribute to the active site.

This sequence belongs to the CarA family. As to quaternary structure, composed of two chains; the small (or glutamine) chain promotes the hydrolysis of glutamine to ammonia, which is used by the large (or ammonia) chain to synthesize carbamoyl phosphate. Tetramer of heterodimers (alpha,beta)4.

It catalyses the reaction hydrogencarbonate + L-glutamine + 2 ATP + H2O = carbamoyl phosphate + L-glutamate + 2 ADP + phosphate + 2 H(+). The catalysed reaction is L-glutamine + H2O = L-glutamate + NH4(+). It participates in amino-acid biosynthesis; L-arginine biosynthesis; carbamoyl phosphate from bicarbonate: step 1/1. The protein operates within pyrimidine metabolism; UMP biosynthesis via de novo pathway; (S)-dihydroorotate from bicarbonate: step 1/3. Small subunit of the glutamine-dependent carbamoyl phosphate synthetase (CPSase). CPSase catalyzes the formation of carbamoyl phosphate from the ammonia moiety of glutamine, carbonate, and phosphate donated by ATP, constituting the first step of 2 biosynthetic pathways, one leading to arginine and/or urea and the other to pyrimidine nucleotides. The small subunit (glutamine amidotransferase) binds and cleaves glutamine to supply the large subunit with the substrate ammonia. The sequence is that of Carbamoyl phosphate synthase small chain from Mycobacterium bovis (strain ATCC BAA-935 / AF2122/97).